Reading from the N-terminus, the 230-residue chain is Vacuole-localized protein 4 (230 aa).

Residues 1 to 19 (MRVSSAIFTIASGIAAVSA) form the signal peptide.

Its subcellular location is the vacuole. Its function is as follows. Vacuolar protein required for aerial conidiation and conidial maturation. Also involved in blastospore production and cell cycle. Plays a vital role in the secretion of Pr1 proteases for cuticular penetration and hence contributes significantly to host infection and virulence. This chain is Vacuole-localized protein 4, found in Beauveria bassiana (strain ARSEF 2860) (White muscardine disease fungus).